A 152-amino-acid chain; its full sequence is Protein SprT-like (152 aa).

In terms of domain architecture, SprT-like spans 7-148; sequence QRLVEEVSLQ…GKCKGKLILI (142 aa). Residue His-67 participates in Zn(2+) binding. The active site involves Glu-68. His-71 is a binding site for Zn(2+).

Belongs to the SprT family. The cofactor is Zn(2+).

Its subcellular location is the cytoplasm. This chain is Protein SprT-like, found in Bacillus thuringiensis subsp. konkukian (strain 97-27).